Consider the following 784-residue polypeptide: Ribosome biogenesis protein BOP1 homolog (784 aa).

Residues M1–G11 are compositionally biased toward basic residues. A disordered region spans residues M1–I159. 4 stretches are compositionally biased toward acidic residues: residues S27–L36, E45–D54, S62–G73, and A84–E111. Composition is skewed to basic and acidic residues over residues K112–P123 and L138–Y148. Positions Q149–D158 are enriched in acidic residues. WD repeat units lie at residues G445 to E486, D488 to V526, T570 to P612, K615 to K653, T656 to Q695, L699 to Q738, and R754 to T784.

This sequence belongs to the WD repeat BOP1/ERB1 family.

It is found in the nucleus. The protein localises to the nucleolus. It localises to the nucleoplasm. Its function is as follows. Required for maturation of ribosomal RNAs and formation of the large ribosomal subunit. This is Ribosome biogenesis protein BOP1 homolog from Drosophila melanogaster (Fruit fly).